Here is a 158-residue protein sequence, read N- to C-terminus: 2-C-methyl-D-erythritol 2,4-cyclodiphosphate synthase (158 aa).

Residues Asp9 and His11 each contribute to the a divalent metal cation site. 4-CDP-2-C-methyl-D-erythritol 2-phosphate-binding positions include 9-11 (DVH) and 35-36 (HS). His43 is an a divalent metal cation binding site. 4-CDP-2-C-methyl-D-erythritol 2-phosphate is bound by residues 57-59 (DIG), 62-66 (FPDTD), 133-136 (TTSE), Phe140, and Arg143.

This sequence belongs to the IspF family. In terms of assembly, homotrimer. It depends on a divalent metal cation as a cofactor.

The enzyme catalyses 4-CDP-2-C-methyl-D-erythritol 2-phosphate = 2-C-methyl-D-erythritol 2,4-cyclic diphosphate + CMP. The protein operates within isoprenoid biosynthesis; isopentenyl diphosphate biosynthesis via DXP pathway; isopentenyl diphosphate from 1-deoxy-D-xylulose 5-phosphate: step 4/6. In terms of biological role, involved in the biosynthesis of isopentenyl diphosphate (IPP) and dimethylallyl diphosphate (DMAPP), two major building blocks of isoprenoid compounds. Catalyzes the conversion of 4-diphosphocytidyl-2-C-methyl-D-erythritol 2-phosphate (CDP-ME2P) to 2-C-methyl-D-erythritol 2,4-cyclodiphosphate (ME-CPP) with a corresponding release of cytidine 5-monophosphate (CMP). This is 2-C-methyl-D-erythritol 2,4-cyclodiphosphate synthase from Pasteurella multocida (strain Pm70).